The primary structure comprises 623 residues: Chaperone protein HtpG (623 aa).

Residues 1–336 (MSETNTQKAA…TEDLPLNVSR (336 aa)) form an a; substrate-binding region. The tract at residues 337-546 (EMLQATPVLA…DGGPDLTMQR (210 aa)) is b. The tract at residues 547–623 (LMRRSGQAMP…ATLLAGPAAE (77 aa)) is c.

The protein belongs to the heat shock protein 90 family. As to quaternary structure, homodimer.

It localises to the cytoplasm. Functionally, molecular chaperone. Has ATPase activity. The chain is Chaperone protein HtpG from Gluconobacter oxydans (strain 621H) (Gluconobacter suboxydans).